A 420-amino-acid chain; its full sequence is UDP-glucuronic acid decarboxylase 1 (420 aa).

Met-1 carries the N-acetylmethionine modification. The Cytoplasmic portion of the chain corresponds to 1-19; sequence MVSKALLRLVSAVNRRRMK. The chain crosses the membrane as a helical; Signal-anchor for type II membrane protein span at residues 20-40; that stretch reads LLLGIALLAYVASVWGNFVNM. The Lumenal segment spans residues 41–420; that stretch reads RSIQENGELK…RIKKGRTRHS (380 aa). Residue Thr-94 is modified to Phosphothreonine. Residues Gly-98, Phe-99, Val-100, Asp-119, Asn-120, Phe-122, Thr-123, Gly-124, Asp-144, and Val-145 each contribute to the NAD(+) site. Leu-149 and Tyr-150 together coordinate UDP-alpha-D-glucuronate. NAD(+) is bound by residues Leu-159 and Ser-161. Lys-177 is a UDP-alpha-D-glucuronate binding site. Thr-178 is an NAD(+) binding site. Positions 185, 188, 191, and 192 each coordinate UDP-alpha-D-glucuronate. Residues Ala-200, Tyr-231, and Lys-235 each contribute to the NAD(+) site. The Proton acceptor role is filled by Tyr-231. Positions 245, 248, and 249 each coordinate UDP-alpha-D-glucuronate. 3 residues coordinate NAD(+): Thr-261, His-267, and Arg-272. Asn-316 is a glycosylation site (N-linked (GlcNAc...) asparagine).

The protein belongs to the NAD(P)-dependent epimerase/dehydratase family. UDP-glucuronic acid decarboxylase subfamily. As to quaternary structure, homodimer and homotetramer. Interacts with AKT1. The cofactor is NAD(+).

Its subcellular location is the golgi apparatus. The protein localises to the golgi stack membrane. It catalyses the reaction UDP-alpha-D-glucuronate + H(+) = UDP-alpha-D-xylose + CO2. It functions in the pathway nucleotide-sugar biosynthesis; UDP-alpha-D-xylose biosynthesis; UDP-alpha-D-xylose from UDP-alpha-D-glucuronate: step 1/1. Catalyzes the NAD-dependent decarboxylation of UDP-glucuronic acid to UDP-xylose. Necessary for the biosynthesis of the core tetrasaccharide in glycosaminoglycan biosynthesis. This Homo sapiens (Human) protein is UDP-glucuronic acid decarboxylase 1.